The following is a 262-amino-acid chain: MESGGLGCAVCVLTGASRGFGRALAPRLAQLLAPGSVLLLCARSDSALRRLEEELGAQQPGLRVVRAAADLGTEAGLRQVLRAVRELPKPEGLQRLLLINNAGTLGDVSKGVLNVNDPAEVNNYWALNLTSMLCLTSGTLNAFPDSPGLSKTVVNISSLCALQPFKGWGLYCTGKAARDMLCQVLAAEEPSVRVLSYAPGPLDTDMQQLARETSMDPELRNRLQRLKSEGELVDCGTSAQKLLNLLQKDTFQSGAHVDFYDN.

N-acetylmethionine is present on M1. NADP(+) contacts are provided by residues 15–21 and 43–44; these read GASRGFG and RS. A Phosphoserine modification is found at S46. 70–71 provides a ligand contact to NADP(+); the sequence is DL. Substrate contacts are provided by residues 158-159 and Y171; that span reads SL. Residue K175 participates in NADP(+) binding. The residue at position 196 (S196) is a Phosphoserine. Position 200 (G200) interacts with substrate. Position 202-207 (202-207) interacts with NADP(+); sequence LDTDMQ. S214 is modified (phosphoserine). D258 contributes to the substrate binding site.

The protein belongs to the sepiapterin reductase family. Homodimer.

Its subcellular location is the cytoplasm. The enzyme catalyses L-erythro-7,8-dihydrobiopterin + NADP(+) = L-sepiapterin + NADPH + H(+). It catalyses the reaction (6R)-L-erythro-5,6,7,8-tetrahydrobiopterin + 2 NADP(+) = 6-pyruvoyl-5,6,7,8-tetrahydropterin + 2 NADPH + 2 H(+). The catalysed reaction is (S)-benzoin + NADP(+) = benzil + NADPH + H(+). In terms of biological role, catalyzes the final one or two reductions in tetra-hydrobiopterin biosynthesis to form 5,6,7,8-tetrahydrobiopterin. The enzyme also catalyzes the reduction of benzil to (S)-benzoin. This chain is Sepiapterin reductase (SPR), found in Meriones unguiculatus (Mongolian jird).